Reading from the N-terminus, the 300-residue chain is Heme A synthase (300 aa).

The Cytoplasmic segment spans residues 1-8 (MLKEKNLK). A helical membrane pass occupies residues 9–29 (WLSLFTTVLMLFVQIGGALVT). Residues 30–64 (KTGSADGCGSSWPLCHGKFVPTHIPKETLIELAHR) are Extracellular-facing. A disulfide bond links Cys-37 and Cys-44. Glu-60 is an active-site residue. His-63 is a binding site for heme o. The helical transmembrane segment at 65–85 (GVSGLALLSVTWLVILSIKYI) threads the bilayer. Topologically, residues 86 to 92 (GHKKETK) are cytoplasmic. A helical membrane pass occupies residues 93 to 113 (FLCYMSIGFIFAQALIGAAAV). The Extracellular portion of the chain corresponds to 114 to 123 (MWQQNGFVLA). Residues 124-144 (LHFGISLISFSAVFLLTLLIF) traverse the membrane as a helical segment. Position 125 (His-125) interacts with heme o. The Cytoplasmic portion of the chain corresponds to 145–163 (EVDQKFDATKLILQPKLRR). A helical membrane pass occupies residues 164–184 (HTIGLTSFIYFVIYSGALVRH). At 185–218 (EKASLACSSWPLCRKGAFILPQNFYEWVQMSHRT) the chain is on the extracellular side. A disulfide bond links Cys-191 and Cys-197. Residue His-216 participates in heme b binding. Residues 219 to 239 (LAFILFIWLTYVAFHAMRNYA) form a helical membrane-spanning segment. The Cytoplasmic portion of the chain corresponds to 240 to 249 (QYRVIKYGYM). A helical transmembrane segment spans residues 250 to 270 (IAFILICLQVTTGALTIFTAV). The Extracellular portion of the chain corresponds to 271 to 275 (NLYIA). The chain crosses the membrane as a helical span at residues 276–296 (LLHALFITLLFGLLCYFILLI). His-278 serves as a coordination point for heme b. Residues 297–300 (SRAK) are Cytoplasmic-facing.

It belongs to the COX15/CtaA family. Type 1 subfamily. As to quaternary structure, interacts with CtaB. The cofactor is heme b.

It localises to the cell membrane. It catalyses the reaction Fe(II)-heme o + 2 A + H2O = Fe(II)-heme a + 2 AH2. It functions in the pathway porphyrin-containing compound metabolism; heme A biosynthesis; heme A from heme O: step 1/1. Catalyzes the conversion of heme O to heme A by two successive hydroxylations of the methyl group at C8. The first hydroxylation forms heme I, the second hydroxylation results in an unstable dihydroxymethyl group, which spontaneously dehydrates, resulting in the formyl group of heme A. The polypeptide is Heme A synthase (Macrococcus caseolyticus (strain JCSC5402) (Macrococcoides caseolyticum)).